The primary structure comprises 179 residues: Large ribosomal subunit protein uL6 (179 aa).

It belongs to the universal ribosomal protein uL6 family. Part of the 50S ribosomal subunit.

Its function is as follows. This protein binds to the 23S rRNA, and is important in its secondary structure. It is located near the subunit interface in the base of the L7/L12 stalk, and near the tRNA binding site of the peptidyltransferase center. The sequence is that of Large ribosomal subunit protein uL6 from Methylacidiphilum infernorum (isolate V4) (Methylokorus infernorum (strain V4)).